Reading from the N-terminus, the 652-residue chain is 1,4-alpha-glucan branching enzyme GlgB (652 aa).

The active-site Nucleophile is D322. Residue E373 is the Proton donor of the active site.

Belongs to the glycosyl hydrolase 13 family. GlgB subfamily. In terms of assembly, monomer.

It catalyses the reaction Transfers a segment of a (1-&gt;4)-alpha-D-glucan chain to a primary hydroxy group in a similar glucan chain.. It participates in glycan biosynthesis; glycogen biosynthesis. In terms of biological role, catalyzes the formation of the alpha-1,6-glucosidic linkages in glycogen by scission of a 1,4-alpha-linked oligosaccharide from growing alpha-1,4-glucan chains and the subsequent attachment of the oligosaccharide to the alpha-1,6 position. In Deinococcus geothermalis (strain DSM 11300 / CIP 105573 / AG-3a), this protein is 1,4-alpha-glucan branching enzyme GlgB.